The chain runs to 149 residues: Deoxyuridine 5'-triphosphate nucleotidohydrolase (149 aa).

Residues 68-70 (RSG), Asn81, 85-87 (TID), and Lys95 contribute to the substrate site.

It belongs to the dUTPase family. The cofactor is Mg(2+).

The enzyme catalyses dUTP + H2O = dUMP + diphosphate + H(+). The protein operates within pyrimidine metabolism; dUMP biosynthesis; dUMP from dCTP (dUTP route): step 2/2. Functionally, this enzyme is involved in nucleotide metabolism: it produces dUMP, the immediate precursor of thymidine nucleotides and it decreases the intracellular concentration of dUTP so that uracil cannot be incorporated into DNA. This Bdellovibrio bacteriovorus (strain ATCC 15356 / DSM 50701 / NCIMB 9529 / HD100) protein is Deoxyuridine 5'-triphosphate nucleotidohydrolase.